The sequence spans 327 residues: Acyl-CoA desaturase (327 aa).

Over 1–39 (MPDREIKSPIWHPEPGTVEDVFDHTYKEKEGPKPPTVIV) the chain is Cytoplasmic. The helical transmembrane segment at 40-60 (WRNVILMSLLHLGALYGLFLF) threads the bilayer. Asparagine 42 is a substrate binding site. The Lumenal segment spans residues 61–64 (PSAR). The chain crosses the membrane as a helical span at residues 65–85 (ALTWIWFFGCLLFSALGITAG). At 86-184 (AHRLWSHRSY…DKVVMFQRRF (99 aa)) the chain is on the cytoplasmic side. Residues histidine 87 and histidine 92 each coordinate Fe cation. The Histidine box-1 motif lies at 87–92 (HRLWSH). Substrate contacts are provided by asparagine 115, arginine 122, and aspartate 123. 3 residues coordinate Fe cation: histidine 124, histidine 127, and histidine 128. The short motif at 124–128 (HRVHH) is the Histidine box-2 element. The substrate site is built by arginine 155 and lysine 156. The helical transmembrane segment at 185-204 (YKPSVLLMCFFVPTFVPWYV) threads the bilayer. At 205–208 (WGES) the chain is on the lumenal side. The helical transmembrane segment at 209–230 (LWVAYFVPALLRYALVLNATWL) threads the bilayer. Tryptophan 229 is a substrate binding site. At 231 to 327 (VNSAAHMWGN…RTGDGSHWSG (97 aa)) the chain is on the cytoplasmic side. Fe cation is bound by residues histidine 236, histidine 265, histidine 268, and histidine 269. The short motif at 265-269 (HNYHH) is the Histidine box-3 element.

The protein belongs to the fatty acid desaturase type 1 family. Fe(2+) is required as a cofactor.

It is found in the endoplasmic reticulum membrane. The catalysed reaction is octadecanoyl-CoA + 2 Fe(II)-[cytochrome b5] + O2 + 2 H(+) = (9Z)-octadecenoyl-CoA + 2 Fe(III)-[cytochrome b5] + 2 H2O. Its function is as follows. Stearoyl-CoA desaturase that utilizes O(2) and electrons from reduced cytochrome b5 to introduce the first double bond into saturated fatty acyl-CoA substrates. Has high specificity and catalyzes the insertion of a cis double bond at the delta-9 position into fatty acyl-CoA substrates including palmitoyl-CoA and stearoyl-CoA. Contributes to the biosynthesis of membrane phospholipids, cholesterol esters and triglycerides. The chain is Acyl-CoA desaturase from Cyprinus carpio (Common carp).